The chain runs to 120 residues: Large ribosomal subunit protein uL18c (120 aa).

Belongs to the universal ribosomal protein uL18 family. In terms of assembly, part of the 50S ribosomal subunit; contacts the 5S rRNA.

Its subcellular location is the plastid. It localises to the chloroplast. In terms of biological role, binds 5S rRNA, forms part of the central protuberance of the 50S subunit. In Pyropia yezoensis (Susabi-nori), this protein is Large ribosomal subunit protein uL18c (rpl18).